Consider the following 344-residue polypeptide: Dihydroorotate dehydrogenase (quinone) (344 aa).

FMN-binding positions include 64–68 and Thr88; that span reads AGLDK. Residue Lys68 coordinates substrate. 113–117 serves as a coordination point for substrate; it reads NRMGF. Asn144 and Asn177 together coordinate FMN. A substrate-binding site is contributed by Asn177. The Nucleophile role is filled by Ser180. A substrate-binding site is contributed by Asn182. Residues Lys222 and Thr250 each contribute to the FMN site. 251–252 serves as a coordination point for substrate; the sequence is NT. Residues Gly273, Gly302, and 323–324 contribute to the FMN site; that span reads YS.

Belongs to the dihydroorotate dehydrogenase family. Type 2 subfamily. In terms of assembly, monomer. The cofactor is FMN.

It is found in the cell membrane. It carries out the reaction (S)-dihydroorotate + a quinone = orotate + a quinol. Its pathway is pyrimidine metabolism; UMP biosynthesis via de novo pathway; orotate from (S)-dihydroorotate (quinone route): step 1/1. In terms of biological role, catalyzes the conversion of dihydroorotate to orotate with quinone as electron acceptor. This chain is Dihydroorotate dehydrogenase (quinone), found in Polynucleobacter asymbioticus (strain DSM 18221 / CIP 109841 / QLW-P1DMWA-1) (Polynucleobacter necessarius subsp. asymbioticus).